Here is a 232-residue protein sequence, read N- to C-terminus: 6-phosphogluconolactonase (232 aa).

This sequence belongs to the glucosamine/galactosamine-6-phosphate isomerase family. 6-phosphogluconolactonase subfamily.

It catalyses the reaction 6-phospho-D-glucono-1,5-lactone + H2O = 6-phospho-D-gluconate + H(+). The protein operates within carbohydrate degradation; pentose phosphate pathway; D-ribulose 5-phosphate from D-glucose 6-phosphate (oxidative stage): step 2/3. In terms of biological role, hydrolysis of 6-phosphogluconolactone to 6-phosphogluconate. In Caulobacter vibrioides (strain ATCC 19089 / CIP 103742 / CB 15) (Caulobacter crescentus), this protein is 6-phosphogluconolactonase (pgl).